Reading from the N-terminus, the 152-residue chain is uncharacterized protein (152 aa).

Residues 3–143 form the HTH marR-type domain; sequence EQKLCQAINL…IIEIFTILKS (141 aa). The H-T-H motif DNA-binding region spans 55–78; sequence PGSLAMYQNVHKSAISNRLKKLLE.

This is an uncharacterized protein from Bacillus subtilis (strain 168).